We begin with the raw amino-acid sequence, 275 residues long: Prohibitin-1 (275 aa).

Residues 106-109 (YQNL) carry the AIM motif.

This sequence belongs to the prohibitin family. The mitochondrial prohibitin complex consists of two subunits (PHB1 and PHB2). The subunits assemble into a membrane-associated ring-shaped supercomplex of approximately 1 mDa. Interacts with ATG24/SNX4; the interaction is direct and plays a role in mitophagy.

It is found in the mitochondrion inner membrane. Functionally, prohibitin probably acts as a holdase/unfoldase for the stabilization of newly synthesized mitochondrial proteins. Involved in mitophagy. Required for the switch to necrotrophic growth. The protein is Prohibitin-1 of Colletotrichum higginsianum (strain IMI 349063) (Crucifer anthracnose fungus).